A 777-amino-acid chain; its full sequence is uncharacterized protein (777 aa).

8 disordered regions span residues 1–101 (MNNN…NLSN), 128–150 (SYNNNNNNNNNNKNNNNNINDDN), 219–267 (HHIH…NNMN), 334–366 (SLPFSSLSDNNGDDDDDGIDDGIDDGIDDGIDD), 391–466 (ISNS…ATIS), 529–577 (KNLN…NNKG), 590–622 (LAQEPNDEQNKTKKELEEVKEEEEEEEEEISTI), and 713–751 (EKQGGDDPEDSSDSDSDSDSNSNSDSSDLGNITVRKWKP). Composition is skewed to low complexity over residues 128-147 (SYNNNNNNNNNNKNNNNNIN) and 243-265 (NNNNNNNNNNNNNNNNNINNHNN). Residues 334-343 (SLPFSSLSDN) are compositionally biased toward polar residues. The span at 344-366 (NGDDDDDGIDDGIDDGIDDGIDD) shows a compositional bias: acidic residues. Over residues 391 to 407 (ISNSFHQNQSPCNNSFK) the composition is skewed to polar residues. 2 stretches are compositionally biased toward low complexity: residues 408 to 466 (NNNN…ATIS) and 532 to 574 (NNNN…NNKN). Positions 597–606 (EQNKTKKELE) are enriched in basic and acidic residues. Composition is skewed to acidic residues over residues 607–620 (EVKEEEEEEEEEIS) and 718–730 (DDPEDSSDSDSDS). The span at 731-740 (DSNSNSDSSD) shows a compositional bias: low complexity.

This is an uncharacterized protein from Dictyostelium discoideum (Social amoeba).